The following is a 308-amino-acid chain: tRNA pseudouridine synthase B (308 aa).

The active-site Nucleophile is Asp-47.

This sequence belongs to the pseudouridine synthase TruB family. Type 1 subfamily.

It catalyses the reaction uridine(55) in tRNA = pseudouridine(55) in tRNA. Responsible for synthesis of pseudouridine from uracil-55 in the psi GC loop of transfer RNAs. This chain is tRNA pseudouridine synthase B, found in Xanthomonas campestris pv. campestris (strain B100).